A 325-amino-acid chain; its full sequence is Phospholipid phosphatase-related protein type 1 (325 aa).

The next 3 helical transmembrane spans lie at 11–31 (YSII…TVLL), 67–87 (FISP…IIFI), and 127–147 (FIGV…AGQV). Residue asparagine 163 is glycosylated (N-linked (GlcNAc...) asparagine). The next 3 membrane-spanning stretches (helical) occupy residues 201–218 (AALS…ITST), 230–247 (VLCL…LNRV), and 257–277 (VIGG…CVVH). Asparagine 316 is a glycosylation site (N-linked (GlcNAc...) asparagine).

It belongs to the PA-phosphatase related phosphoesterase family.

It is found in the cell membrane. Its subcellular location is the cell projection. The protein localises to the neuron projection. In terms of biological role, may play a role in neurite outgrowth and neurogenesis. This Xenopus tropicalis (Western clawed frog) protein is Phospholipid phosphatase-related protein type 1.